Consider the following 361-residue polypeptide: Alanine racemase (361 aa).

Lysine 34 (proton acceptor; specific for D-alanine) is an active-site residue. An N6-(pyridoxal phosphate)lysine modification is found at lysine 34. Substrate is bound at residue arginine 129. Tyrosine 256 acts as the Proton acceptor; specific for L-alanine in catalysis. Methionine 304 lines the substrate pocket.

The protein belongs to the alanine racemase family. It depends on pyridoxal 5'-phosphate as a cofactor.

It carries out the reaction L-alanine = D-alanine. The protein operates within amino-acid biosynthesis; D-alanine biosynthesis; D-alanine from L-alanine: step 1/1. Its function is as follows. Catalyzes the interconversion of L-alanine and D-alanine. May also act on other amino acids. This chain is Alanine racemase (alr), found in Corynebacterium glutamicum (strain R).